The primary structure comprises 127 residues: Holo-[acyl-carrier-protein] synthase (127 aa).

Residues aspartate 8 and glutamate 57 each contribute to the Mg(2+) site.

This sequence belongs to the P-Pant transferase superfamily. AcpS family. It depends on Mg(2+) as a cofactor.

It localises to the cytoplasm. The enzyme catalyses apo-[ACP] + CoA = holo-[ACP] + adenosine 3',5'-bisphosphate + H(+). Transfers the 4'-phosphopantetheine moiety from coenzyme A to a Ser of acyl-carrier-protein. The chain is Holo-[acyl-carrier-protein] synthase from Hydrogenovibrio crunogenus (strain DSM 25203 / XCL-2) (Thiomicrospira crunogena).